The sequence spans 431 residues: MAPTLDSDSTVLSIRSDFRQGRVQRQLKSELYRNDNRMSVENDFRAPYIQLPYPQARLNPKTTECMNITFDWLSSMGIDKQVDPSVWQAFVASRLSDIVGYSCNEDIEPEDFLWLCKFTTWLFIFDSMMDDGHWAENICMSSHAILEMNLILMWNDPENERLLECSKSILDLVMAIDASGSRLQLDKFHADMVDARKKSKSLLDVKMGVFTSAFRDCWMEYVEDVPAEYTTRIAQTFQRYISSCLWEEKNRKEQAECMNVADYVTLRRFSGCVEPYFVYVDRIIEHKRRKSPISHIPNTLFYGEHMQNMLAAATDVICWHNDIFSFPKETIREGDKHNLVYTVFQQYNCHSCTQAGELIVELLHDRIAEMEFAYEKLRSAAAPEFHPAIDVYIKNCRDWISGSHEFHMNSSRYNVRSFSGPPENVKHINSV.

Mg(2+) is bound by residues Asp-126 and Asp-130. Residue Arg-267 coordinates (2E,6E)-farnesyl diphosphate. Residues Asn-321 and Ser-325 each contribute to the Mg(2+) site. Residue Lys-328 participates in (2E,6E)-farnesyl diphosphate binding. Mg(2+) is bound at residue Glu-329. 412–413 (RY) provides a ligand contact to (2E,6E)-farnesyl diphosphate.

Belongs to the terpene synthase family. It depends on Mg(2+) as a cofactor.

It catalyses the reaction (2E,6E)-farnesyl diphosphate = (-)-alpha-gurjunene + diphosphate. The catalysed reaction is (2E,6E)-farnesyl diphosphate + H2O = 5-hydroxy-alpha-gurjunene + diphosphate. Its pathway is secondary metabolite biosynthesis; terpenoid biosynthesis. Its function is as follows. Catalyzes the conversion of (2E,6E)-farnesyl diphosphate (FPP) into the sesquiterpene alcohols (-)-alpha-gurjunene and 5-hydroxy-alpha-gurjunene. Other unidentified sesquiterpene alcohols found to be catalyzed by MTPSL4 may arise from carbocation reaction intermediates along the catalytic cascade to gurjunene being quenched by a water molecule, yielding formation of the alcohols. The chain is Alpha-gurjunene synthase from Marchantia polymorpha (Common liverwort).